A 134-amino-acid chain; its full sequence is Small ribosomal subunit protein uS11 (134 aa).

It belongs to the universal ribosomal protein uS11 family. As to quaternary structure, part of the 30S ribosomal subunit. Interacts with proteins S7 and S18. Binds to IF-3.

Functionally, located on the platform of the 30S subunit, it bridges several disparate RNA helices of the 16S rRNA. Forms part of the Shine-Dalgarno cleft in the 70S ribosome. The polypeptide is Small ribosomal subunit protein uS11 (Albidiferax ferrireducens (strain ATCC BAA-621 / DSM 15236 / T118) (Rhodoferax ferrireducens)).